Consider the following 393-residue polypeptide: tRNA-specific 2-thiouridylase MnmA (393 aa).

ATP-binding positions include 19–26 (AMSGGVDS) and L45. The active-site Nucleophile is C113. C113 and C210 form a disulfide bridge. G137 provides a ligand contact to ATP. The tract at residues 160 to 162 (RDQ) is interaction with tRNA. The active-site Cysteine persulfide intermediate is C210.

This sequence belongs to the MnmA/TRMU family.

The protein localises to the cytoplasm. The catalysed reaction is S-sulfanyl-L-cysteinyl-[protein] + uridine(34) in tRNA + AH2 + ATP = 2-thiouridine(34) in tRNA + L-cysteinyl-[protein] + A + AMP + diphosphate + H(+). Catalyzes the 2-thiolation of uridine at the wobble position (U34) of tRNA, leading to the formation of s(2)U34. In Bradyrhizobium diazoefficiens (strain JCM 10833 / BCRC 13528 / IAM 13628 / NBRC 14792 / USDA 110), this protein is tRNA-specific 2-thiouridylase MnmA.